The sequence spans 456 residues: tRNA modification GTPase MnmE (456 aa).

Positions 23, 85, and 124 each coordinate (6S)-5-formyl-5,6,7,8-tetrahydrofolate. One can recognise a TrmE-type G domain in the interval 220–376 (GVAVLIAGKP…LKESIFQTFI (157 aa)). Asparagine 230 provides a ligand contact to K(+). Residues 230–235 (NVGKSS), 249–255 (TSVPGTT), and 274–277 (DTAG) contribute to the GTP site. Residue serine 234 participates in Mg(2+) binding. The K(+) site is built by threonine 249, valine 251, and threonine 254. Threonine 255 contributes to the Mg(2+) binding site. (6S)-5-formyl-5,6,7,8-tetrahydrofolate is bound at residue lysine 456.

This sequence belongs to the TRAFAC class TrmE-Era-EngA-EngB-Septin-like GTPase superfamily. TrmE GTPase family. As to quaternary structure, homodimer. Heterotetramer of two MnmE and two MnmG subunits. Requires K(+) as cofactor.

It localises to the cytoplasm. Functionally, exhibits a very high intrinsic GTPase hydrolysis rate. Involved in the addition of a carboxymethylaminomethyl (cmnm) group at the wobble position (U34) of certain tRNAs, forming tRNA-cmnm(5)s(2)U34. This chain is tRNA modification GTPase MnmE, found in Geobacter sulfurreducens (strain ATCC 51573 / DSM 12127 / PCA).